The following is a 37-amino-acid chain: Large ribosomal subunit protein bL36 (37 aa).

It belongs to the bacterial ribosomal protein bL36 family.

This is Large ribosomal subunit protein bL36 from Nitratidesulfovibrio vulgaris (strain ATCC 29579 / DSM 644 / CCUG 34227 / NCIMB 8303 / VKM B-1760 / Hildenborough) (Desulfovibrio vulgaris).